An 809-amino-acid polypeptide reads, in one-letter code: WD repeat protein iqw1 (809 aa).

WD repeat units follow at residues 43–82 (GHTG…KPRH), 87–128 (GHVQ…EGGM), 141–180 (CALD…VCNQ), 193–233 (PYRI…KSFR), and 241–295 (SPEK…LFHV). The interval 599–644 (SMYTGHSDLNDDDDDYQDEESYSYASDDDDESDEDSDEGPTLLSLR) is disordered. Residues 608-636 (NDDDDDYQDEESYSYASDDDDESDEDSDE) show a composition bias toward acidic residues. 2 WD repeats span residues 668-708 (CNVE…ILAI) and 711-750 (GDSE…PSGC).

In terms of assembly, interacts with ddb1.

Its subcellular location is the cytoplasm. In terms of biological role, ligand-dependent coactivator of nuclear receptors that may function as a substrate receptor for CUL4-DDB1 E3 ubiquitin-protein ligase complex. This chain is WD repeat protein iqw1 (iqw1), found in Schizosaccharomyces pombe (strain 972 / ATCC 24843) (Fission yeast).